The sequence spans 708 residues: C-Jun-amino-terminal kinase-interacting protein 1 (708 aa).

The disordered stretch occupies residues 1-26; the sequence is MAERESGLSGGAASPPAASPFLGLHI. A compositionally biased stretch (low complexity) spans 11–24; it reads GAASPPAASPFLGL. 3 positions are modified to phosphoserine: S14, S28, and S39. Residues 69-368 are disordered; sequence PPRAGLLSAG…PPRASLSSDT (300 aa). The segment covering 71–87 has biased composition (low complexity); the sequence is RAGLLSAGSSGSAGSRL. T103 bears the Phosphothreonine; by MAPK8, MAPK9 and MAPK10 mark. A compositionally biased stretch (acidic residues) spans 105 to 116; it reads GAEDDEEDDDEL. The tract at residues 126–282 is JNK-binding domain (JBD); the sequence is SKAESGQEPA…EATEEIYLTP (157 aa). At S149 the chain carries Phosphoserine. The interval 154–173 is minimal inhibitory domain (MID); it reads RPKRPTTLNLFPQVPRSQDT. The span at 159–179 shows a compositional bias: polar residues; that stretch reads TTLNLFPQVPRSQDTLNNNSL. S178, S184, S190, S192, and S193 each carry phosphoserine. Residues 191–201 show a composition bias toward polar residues; that stretch reads RSSSPLKTGEQ. At T202 the chain carries Phosphothreonine; by MAPK8, MAPK9 and MAPK10. Position 211 is a phosphoserine (S211). Over residues 220–232 the composition is skewed to polar residues; that stretch reads PVPTQDRGTSTDS. Residues 264 to 274 are compositionally biased toward basic and acidic residues; sequence IHYQADVRLEA. The interval 280 to 468 is interaction with MAP3K7; the sequence is LTPVQRPPDP…NVFMSGRSRS (189 aa). Residues 292-308 show a composition bias toward polar residues; that stretch reads PTSTFLPPTESRMSVSS. Phosphoserine is present on residues S308, S325, S327, S337, S352, S363, S366, S404, and S406. 2 short sequence motifs (D-box) span residues 350-357 and 361-369; these read RGSLGEPP and RASLSSDTS. T408 is subject to Phosphothreonine. The tract at residues 426–448 is disordered; the sequence is EEYEEAPQPRPPTCLSEDSTPDE. Phosphoserine occurs at positions 441 and 444. T445 carries the post-translational modification Phosphothreonine. Phosphoserine is present on residues S466, S468, S469, and S470. Positions 468–657 are interaction with VRK2; the sequence is SSSAESFGLF…PKNNKYFGFI (190 aa). The region spanning 485-546 is the SH3 domain; the sequence is EHEQTHRAIF…PAYYAIEVTK (62 aa). One can recognise a PID domain in the interval 558-697; that stretch reads SDWIDQFRVK…FQQFYKQFVE (140 aa).

Belongs to the JIP scaffold family. In terms of assembly, forms homo- or heterooligomeric complexes. Binds specific components of the JNK signaling pathway namely MAPK8/JNK1, MAPK9/JNK2, MAPK10/JNK3, MAP2K7/MKK7, MAP3K11/MLK3 and DLK1. Also binds the proline-rich domain-containing splice variant of apolipoprotein E receptor 2 (ApoER2). Interacts, via the PID domain, with ARHGEF28. Binds the cytoplasmic tails of LRP1 and LRP2 (Megalin). Binds the TPR motif-containing C-terminal of kinesin light chain, KLC1. Pre-assembled MAPK8IP1 scaffolding complexes are then transported as a cargo of kinesin, to the required subcellular location. Interacts with the cytoplasmic domain of APP. Interacts with DCLK2, VRK2 and MAP3K7/TAK1. Found in a complex with SH3RF1, RAC1, MAP3K11/MLK3, MAP2K7/MKK7 and MAPK8/JNK1. Found in a complex with SH3RF1, RAC2, MAP3K7/TAK1, MAP2K7/MKK7, MAPK8/JNK1 and MAPK9/JNK2. Interacts with SH3RF2. Phosphorylated by MAPK8, MAPK9 and MAPK10. Phosphorylation on Thr-103 is also necessary for the dissociation and activation of MAP3K12. Phosphorylated by VRK2. Hyperphosphorylated during mitosis following activation of stress-activated and MAP kinases. Post-translationally, ubiquitinated. Two preliminary events are required to prime for ubiquitination; phosphorylation and an increased in intracellular calcium concentration. Then, the calcium influx initiates ubiquitination and degradation by the ubiquitin-proteasome pathway. In terms of tissue distribution, highly expressed in brain and pancreatic beta-cells. Weaker expression found in kidney.

It localises to the cytoplasm. It is found in the perinuclear region. The protein resides in the nucleus. Its subcellular location is the endoplasmic reticulum membrane. The protein localises to the mitochondrion membrane. In terms of biological role, the JNK-interacting protein (JIP) group of scaffold proteins selectively mediates JNK signaling by aggregating specific components of the MAPK cascade to form a functional JNK signaling module. Required for JNK activation in response to excitotoxic stress. Cytoplasmic MAPK8IP1 causes inhibition of JNK-regulated activity by retaining JNK in the cytoplasm and thus inhibiting the JNK phosphorylation of c-Jun. May also participate in ApoER2-specific reelin signaling. Directly, or indirectly, regulates GLUT2 gene expression and beta-cell function. Appears to have a role in cell signaling in mature and developing nerve terminals. May function as a regulator of vesicle transport, through interactions with the JNK-signaling components and motor proteins. Functions as an anti-apoptotic protein and whose level seems to influence the beta-cell death or survival response. Acts as a scaffold protein that coordinates with SH3RF1 in organizing different components of the JNK pathway, including RAC1 or RAC2, MAP3K11/MLK3 or MAP3K7/TAK1, MAP2K7/MKK7, MAPK8/JNK1 and/or MAPK9/JNK2 into a functional multiprotein complex to ensure the effective activation of the JNK signaling pathway. Regulates the activation of MAPK8/JNK1 and differentiation of CD8(+) T-cells. The sequence is that of C-Jun-amino-terminal kinase-interacting protein 1 (Mapk8ip1) from Rattus norvegicus (Rat).